Here is a 486-residue protein sequence, read N- to C-terminus: Dipeptide and tripeptide permease B (486 aa).

The Cytoplasmic segment spans residues 1–27; the sequence is MNKPVSIGLLQQPKPFFMIFFVELWER. The helical transmembrane segment at 28–48 threads the bilayer; the sequence is FGYYGVQGVLTVYFVQKLGFS. The Periplasmic portion of the chain corresponds to 49-52; the sequence is QEQA. Residues 53 to 73 form a helical membrane-spanning segment; that stretch reads FITFGAFAALVFGLISIGGYV. Residues 74 to 82 are Cytoplasmic-facing; sequence GDHLLGTKR. A helical transmembrane segment spans residues 83–103; that stretch reads TIVLGAIVLAIGYFMTGLSIL. Topologically, residues 104 to 106 are periplasmic; sequence HPN. The chain crosses the membrane as a helical span at residues 107–127; sequence LIFYALGTIAVGNGLFKANPA. The Cytoplasmic segment spans residues 128 to 146; that stretch reads SLLSKCYPPKDPRLDGAFT. A helical transmembrane segment spans residues 147–167; it reads LFYMSINLGSLFSLALAPVIA. The Periplasmic portion of the chain corresponds to 168 to 172; sequence EKFSY. The helical transmembrane segment at 173-193 threads the bilayer; it reads AVTYNICGIGLIIALLVYIFC. Residues 194 to 211 are Cytoplasmic-facing; the sequence is RNTVRNIGSEPDHQRINY. Residues 212 to 232 traverse the membrane as a helical segment; that stretch reads TNLFLVVAGSVVMVYVCAWLM. H233 is a topological domain (periplasmic). The helical transmembrane segment at 234–254 threads the bilayer; that stretch reads NVKIANIMLITLSVIVVFIFF. Topologically, residues 255–267 are cytoplasmic; it reads REALKQDKIGRNK. Residues 268-288 traverse the membrane as a helical segment; the sequence is MFVAFILMLQAIVFFILYAQM. At 289–311 the chain is on the periplasmic side; it reads PTSLNFFAIHNVHHQLLGFNINP. Residues 312–332 traverse the membrane as a helical segment; sequence VSFQALNPFWIVVASPILAVL. The Cytoplasmic segment spans residues 333–348; that stretch reads YTHWGAKGKDLTMPAK. Residues 349–369 form a helical membrane-spanning segment; it reads FAVGMFLCSLGFLTAAAAGLW. The Periplasmic segment spans residues 370 to 375; it reads FADEQG. The helical transmembrane segment at 376-396 threads the bilayer; that stretch reads LTSAWFIVLVYLFQGVGELMI. The Cytoplasmic segment spans residues 397–419; the sequence is SALGLAMIAALVPQYLMGFILGM. The chain crosses the membrane as a helical span at residues 420–440; the sequence is WYLTQATSSLLGGYVAALTAA. The Periplasmic segment spans residues 441-456; it reads PKGITDPLQTLPVYTS. A helical transmembrane segment spans residues 457–477; the sequence is VFGKIGIATFIVAIIMAATVP. Residues 478-486 are Cytoplasmic-facing; sequence LLNRMMQEK.

The protein belongs to the major facilitator superfamily. Proton-dependent oligopeptide transporter (POT/PTR) (TC 2.A.17) family. DtpB subfamily.

It is found in the cell inner membrane. Functionally, proton-dependent permease that transports di- and tripeptides. In Photorhabdus luminescens (Xenorhabdus luminescens), this protein is Dipeptide and tripeptide permease B.